We begin with the raw amino-acid sequence, 1192 residues long: DNA ligase 1 (1192 aa).

2 disordered regions span residues 29–257 (ELNK…KEKE) and 280–517 (EKEL…KSTQ). The segment covering 42 to 56 (EAVVKEKVEKKEKKE) has biased composition (basic and acidic residues). Acidic residues predominate over residues 70-113 (EEEEEEQEEQDGEEEQEEEEEYQQQDEEIEEDINGEEEMELDEN). Over residues 141-155 (KTIENKETKKPEKQS) the composition is skewed to basic and acidic residues. Residues 172–198 (DDEEDEEDENKTDDNDLDDMLDDDSDN) are compositionally biased toward acidic residues. 2 stretches are compositionally biased toward basic and acidic residues: residues 199–257 (EKDS…KEKE) and 280–368 (EKEL…RANA). 2 stretches are compositionally biased toward low complexity: residues 371–382 (KSSVPTSTSKNS) and 410–434 (STTTTTTTTTTSTATTISSKSISSP). Positions 435–467 (SKKEEKEVITSKKQVEATKVEVKKEKEKEKEKE) are enriched in basic and acidic residues. Residues 468 to 511 (KEDDEEEEEEEEDDDEKLEDIDEEEYEEEEEEDEEGISENEEEE) show a composition bias toward acidic residues. Residues 724-733 (KLRIGLAERS) form an interaction with target DNA region. Glutamate 842 lines the ATP pocket. The active-site N6-AMP-lysine intermediate is lysine 844. Positions 849 and 865 each coordinate ATP. Mg(2+) is bound at residue glutamate 897. Residues 918–920 (ARK) form an interaction with target DNA region. A Mg(2+)-binding site is contributed by glutamate 996. 3 residues coordinate ATP: lysine 1001, arginine 1014, and lysine 1020. The tract at residues 1157–1192 (DKSPEDATSSDQVVDMYQNQKINSQSSKINEKDEDY) is disordered. Positions 1162-1184 (DATSSDQVVDMYQNQKINSQSSK) are enriched in polar residues.

It belongs to the ATP-dependent DNA ligase family. The cofactor is Mg(2+).

Its subcellular location is the nucleus. It carries out the reaction ATP + (deoxyribonucleotide)n-3'-hydroxyl + 5'-phospho-(deoxyribonucleotide)m = (deoxyribonucleotide)n+m + AMP + diphosphate.. Its function is as follows. DNA ligase that seals nicks in double-stranded DNA during DNA replication, DNA recombination and DNA repair. The chain is DNA ligase 1 (lig1) from Dictyostelium discoideum (Social amoeba).